Consider the following 204-residue polypeptide: VEL1-related protein AC977.05c (204 aa).

Positions 1–17 (MIFKNLISLFFIGLATA) are cleaved as a signal peptide.

This sequence belongs to the VEL1 family.

The protein resides in the cytoplasm. The protein localises to the cytosol. This chain is VEL1-related protein AC977.05c, found in Schizosaccharomyces pombe (strain 972 / ATCC 24843) (Fission yeast).